The primary structure comprises 830 residues: Histone acetyltransferase KAT2A (830 aa).

Residues 1-94 (MAEPSQAPNP…RKAQVRGLPR (94 aa)) are disordered. The residue at position 2 (alanine 2) is an N-acetylalanine. 2 stretches are compositionally biased toward pro residues: residues 7 to 33 (APNP…PAPS) and 41 to 51 (APTPAPAPAPA). Residues 58 to 69 (TGSGGAGVGSGG) show a composition bias toward gly residues. Over residues 83-94 (SQRKAQVRGLPR) the composition is skewed to basic residues. Serine 302 carries the post-translational modification Phosphoserine. Over residues 398-417 (SFSPSMGGGSNSSLSLDSAG) the composition is skewed to low complexity. Residues 398 to 426 (SFSPSMGGGSNSSLSLDSAGTEPMPAGEK) form a disordered region. Positions 496 to 649 (VIGNSLTPKA…GATLMECELN (154 aa)) constitute an N-acetyltransferase domain. N6-acetyllysine is present on lysine 542. The active-site Proton donor/acceptor is the glutamate 568. Acetyl-CoA is bound by residues 572 to 574 (CAV), 579 to 585 (QVKGYGT), and tyrosine 610. Residues 572 to 574 (CAV), 579 to 585 (QVKGYGT), and tyrosine 610 each bind succinyl-CoA. Lysine 721 participates in a covalent cross-link: Glycyl lysine isopeptide (Lys-Gly) (interchain with G-Cter in SUMO2). Residues 721–825 (KDPDQLYTTL…KFFYFKLKEG (105 aa)) enclose the Bromo domain. Position 728 is a phosphothreonine (threonine 728). Residues lysine 752 and lysine 784 each participate in a glycyl lysine isopeptide (Lys-Gly) (interchain with G-Cter in SUMO2) cross-link.

The protein belongs to the acetyltransferase family. GCN5 subfamily. As to quaternary structure, interacts with EP300, CREBBP and ADA2. Component of the TFTC-HAT complex, at least composed of TAF5L, TAF6L, TAF3, TADA3L, SUPT3H/SPT3, TAF2/TAFII150, TAF4/TAFII135, TAF5/TAFII100, KAT2A/GCN5L2, TAF10 and TRRAP. Component of the STAGA transcription coactivator-HAT complex, at least composed of SUPT3H, KAT2A, SUPT7L, TAF5L, TAF6L, TADA3L, TAD1L, TAF10, TAF12, TRRAP and TAF9. The STAGA core complex is associated with a subcomplex required for histone deubiquitination composed of ATXN7L3, ENY2 and USP22. Component of the ADA2A-containing complex (ATAC), composed of KAT14, KAT2A, TADA2L, TADA3L, ZZ3, MBIP, WDR5, YEATS2, CCDC101 and DR1. In the complex, it probably interacts directly with KAT14, MBIP and WDR5. Interacts with PML. Interacts with CEBPB. Interacts with TACC1, TACC2 and TACC3. Interacts with RELA. Interacts with NFATC2. Interacts with TBX5. Interacts with PLK4. Associates with the 2-oxoglutarate dehydrogenase complex. Interacts with XPC; leading to KAT2A recruitment to promoters and subsequent acetylation of histones. Interacts with ERCC3/XPB; leading to KAT2A recruitment to promoters and subsequent acetylation of histones. Interacts with ISL1. Interactions of ISL1 with MLIP1 or KAT2A may be mutually exclusive. In terms of processing, acetylated at Lys-542, inhibiting the protein acetyltransferase activity. Deacetylation at Lys-542 by SIRT6 promotes phosphorylation at Ser-302 and Thr-728 and subsequent activation of the protein acetyltransferase activity, leading to acetylation and inactivation of PPARGC1A. In brain, highly expressed in the hippocampal CA1 region (at protein level). Also expressed in the hippocampal subregions CA3 and the dentate gyrus as well as in the cortex and prefrontal cortex. Expressed at low level in the cerebellum.

The protein localises to the nucleus. Its subcellular location is the chromosome. The protein resides in the cytoplasm. It is found in the cytoskeleton. It localises to the microtubule organizing center. The protein localises to the centrosome. The enzyme catalyses L-lysyl-[histone] + acetyl-CoA = N(6)-acetyl-L-lysyl-[histone] + CoA + H(+). The catalysed reaction is L-lysyl-[protein] + acetyl-CoA = N(6)-acetyl-L-lysyl-[protein] + CoA + H(+). It carries out the reaction succinyl-CoA + L-lysyl-[protein] = N(6)-succinyl-L-lysyl-[protein] + CoA + H(+). It catalyses the reaction glutaryl-CoA + L-lysyl-[protein] = N(6)-glutaryl-L-lysyl-[protein] + CoA + H(+). Functionally, protein lysine acyltransferase that can act as a acetyltransferase, glutaryltransferase, succinyltransferase or malonyltransferase, depending on the context. Acts as a histone lysine succinyltransferase: catalyzes succinylation of histone H3 on 'Lys-79' (H3K79succ), with a maximum frequency around the transcription start sites of genes. Succinylation of histones gives a specific tag for epigenetic transcription activation. Association with the 2-oxoglutarate dehydrogenase complex, which provides succinyl-CoA, is required for histone succinylation. In different complexes, functions either as an acetyltransferase (HAT) or as a succinyltransferase: in the SAGA and ATAC complexes, acts as a histone acetyltransferase. Has significant histone acetyltransferase activity with core histones, but not with nucleosome core particles. Has a a strong preference for acetylation of H3 at 'Lys-9' (H3K9ac). Acetylation of histones gives a specific tag for epigenetic transcription activation. Recruited by the XPC complex at promoters, where it specifically mediates acetylation of histone variant H2A.Z.1/H2A.Z, thereby promoting expression of target genes. Involved in long-term memory consolidation and synaptic plasticity: acts by promoting expression of a hippocampal gene expression network linked to neuroactive receptor signaling. Acts as a positive regulator of T-cell activation: upon TCR stimulation, recruited to the IL2 promoter following interaction with NFATC2 and catalyzes acetylation of histone H3 at 'Lys-9' (H3K9ac), leading to promote IL2 expression. Required for growth and differentiation of craniofacial cartilage and bone by regulating acetylation of histone H3 at 'Lys-9' (H3K9ac). Regulates embryonic stem cell (ESC) pluripotency and differentiation. Also acetylates non-histone proteins, such as CEBPB, MRE11, PPARGC1A, PLK4 and TBX5. Involved in heart and limb development by mediating acetylation of TBX5, acetylation regulating nucleocytoplasmic shuttling of TBX5. Acts as a negative regulator of centrosome amplification by mediating acetylation of PLK4. Acts as a negative regulator of gluconeogenesis by mediating acetylation and subsequent inactivation of PPARGC1A. Also acts as a histone glutaryltransferase: catalyzes glutarylation of histone H4 on 'Lys-91' (H4K91glu), a mark that destabilizes nucleosomes by promoting dissociation of the H2A-H2B dimers from nucleosomes. This chain is Histone acetyltransferase KAT2A, found in Mus musculus (Mouse).